We begin with the raw amino-acid sequence, 346 residues long: Melanoma-associated antigen B4 (346 aa).

Residues 1 to 18 show a composition bias toward basic residues; it reads MPRGQKSKLRAREKRQRT. Residues 1 to 107 are disordered; it reads MPRGQKSKLR…STSTERSLKD (107 aa). A compositionally biased stretch (polar residues) spans 45–54; the sequence is VLRDTASSSL. Residues 92–101 are compositionally biased toward low complexity; it reads ASSSQASTST. In terms of domain architecture, MAGE spans 109–307; it reads LTRKTKMLVQ…NNFPLLYEEA (199 aa). The tract at residues 311–346 is disordered; sequence EEERAGARPRVAARRGTTAMTSAYSRATSSSSSQPM. Low complexity predominate over residues 318–346; sequence RPRVAARRGTTAMTSAYSRATSSSSSQPM.

As to expression, expressed in testis.

It localises to the cytoplasm. This Homo sapiens (Human) protein is Melanoma-associated antigen B4 (MAGEB4).